Reading from the N-terminus, the 88-residue chain is Phosphocarrier protein HPr (88 aa).

Positions 1–88 (MKKIQVVVKD…KAVLEKHQVI (88 aa)) constitute an HPr domain. Catalysis depends on His-15, which acts as the Pros-phosphohistidine intermediate. At Ser-47 the chain carries Phosphoserine; by HPrK/P.

It belongs to the HPr family.

It is found in the cytoplasm. Its activity is regulated as follows. Phosphorylation on Ser-47 inhibits the phosphoryl transfer from enzyme I to HPr. Functionally, general (non sugar-specific) component of the phosphoenolpyruvate-dependent sugar phosphotransferase system (sugar PTS). This major carbohydrate active-transport system catalyzes the phosphorylation of incoming sugar substrates concomitantly with their translocation across the cell membrane. The phosphoryl group from phosphoenolpyruvate (PEP) is transferred to the phosphoryl carrier protein HPr by enzyme I. Phospho-HPr then transfers it to the PTS EIIA domain. In terms of biological role, P-Ser-HPr interacts with the catabolite control protein A (CcpA), forming a complex that binds to DNA at the catabolite response elements cre, operator sites preceding a large number of catabolite-regulated genes. Thus, P-Ser-HPr is a corepressor in carbon catabolite repression (CCR), a mechanism that allows bacteria to coordinate and optimize the utilization of available carbon sources. P-Ser-HPr also plays a role in inducer exclusion, in which it probably interacts with several non-PTS permeases and inhibits their transport activity. In Mycoplasma pneumoniae (strain ATCC 29342 / M129 / Subtype 1) (Mycoplasmoides pneumoniae), this protein is Phosphocarrier protein HPr (ptsH).